Reading from the N-terminus, the 1217-residue chain is Disease resistance protein RPS4 (1217 aa).

Residues 14–175 form the TIR domain; the sequence is PQHQVFINFR…EIVKAVKTAL (162 aa). Residue 23–28 participates in NAD(+) binding; that stretch reads RGADLR. The tract at residues 33-34 is important for interaction with RRS1; the sequence is SH. Glu-88 is a catalytic residue. The NB-ARC domain occupies 211–472; sequence EQRLKDLEEK…FRSQDKDYVE (262 aa). LRR repeat units lie at residues 581 to 606, 614 to 636, 637 to 659, 682 to 706, 708 to 728, 729 to 749, 750 to 774, 796 to 818, 819 to 842, 843 to 860, and 861 to 887; these read MGNL…KINI, LKEV…DFNP, INLV…DKDT, AEKL…MKKM, MLAF…EMNL, ISLK…PLIS, DNIE…KLQR, LKAL…EIDI, SFLN…SVQY, LCLS…GISQ, and LSQL…NLQC. A disordered region spans residues 1161–1195; that stretch reads TTEGVDGRVNKKKKTRMDNGRPKKKQRSGRDDNQT. The Nuclear localization signal signature appears at 1170 to 1177; the sequence is NKKKKTRM.

This sequence belongs to the disease resistance TIR-NB-LRR family. In terms of assembly, interacts with EDS1. Interacts with SRFR1. Interacts with RRS1.

It localises to the endomembrane system. Its subcellular location is the cytoplasm. The protein localises to the nucleus. It catalyses the reaction NAD(+) + H2O = ADP-D-ribose + nicotinamide + H(+). In terms of biological role, disease resistance (R) protein that specifically recognizes the AvrRps4 type III effector avirulence protein from P.syringae. Resistance proteins guard the plant against pathogens that contain an appropriate avirulence protein via an indirect interaction with this avirulence protein. That triggers a defense system including the hypersensitive response, which restricts the pathogen growth. Probably acts as a NAD(+) hydrolase (NADase): in response to activation, catalyzes cleavage of NAD(+) into ADP-D-ribose (ADPR) and nicotinamide; NAD(+) cleavage triggering a defense system that promotes cell death. The combined presence of both regular and alternative RPS4 transcripts with truncated open reading frames (ORFs) is necessary for function. RPS4 function is regulated at multiple levels, including gene expression, alternative splicing, and protein stability. When over-expressed, confers temperature-conditioned EDS1-dependent auto-immunity. Heterodimerization with RRS1 is required to form a functional complex to recognize AvrRps4 and PopP2. Abscisic acid deficiency enhances nuclear accumulation of RPS4 and its cell death-inducing activity. The protein is Disease resistance protein RPS4 of Arabidopsis thaliana (Mouse-ear cress).